The sequence spans 81 residues: MFRIFKMSFAVIIIILALIAFNYTEHTSVIQSVMLVFLGAVMFMQGLEERKKENDGSGAFNIYTAVFVWSVSLIGFTLHII.

2 helical membrane-spanning segments follow: residues 4–24 and 61–81; these read IFKMSFAVIIIILALIAFNYT and NIYTAVFVWSVSLIGFTLHII.

The protein localises to the cell membrane. This is an uncharacterized protein from Bacillus subtilis (strain 168).